The following is a 101-amino-acid chain: Putative pterin-4-alpha-carbinolamine dehydratase (101 aa).

The protein belongs to the pterin-4-alpha-carbinolamine dehydratase family.

It catalyses the reaction (4aS,6R)-4a-hydroxy-L-erythro-5,6,7,8-tetrahydrobiopterin = (6R)-L-erythro-6,7-dihydrobiopterin + H2O. The protein is Putative pterin-4-alpha-carbinolamine dehydratase of Rhodopseudomonas palustris (strain BisA53).